The chain runs to 404 residues: Glucose-1-phosphate adenylyltransferase (404 aa).

Residues Y99, G164, E179 to K180, and S197 contribute to the alpha-D-glucose 1-phosphate site.

This sequence belongs to the bacterial/plant glucose-1-phosphate adenylyltransferase family.

It carries out the reaction alpha-D-glucose 1-phosphate + ATP + H(+) = ADP-alpha-D-glucose + diphosphate. Its pathway is capsule biogenesis; capsule polysaccharide biosynthesis. The protein operates within glycan biosynthesis; glycogen biosynthesis. Involved in the biosynthesis of ADP-glucose, a building block, required in the biosynthesis of maltose-1-phosphate (M1P) and in the elongation reactions to produce linear alpha-1,4-glucans. Catalyzes the reaction between ATP and alpha-D-glucose 1-phosphate (G1P) to produce pyrophosphate and ADP-Glc. The sequence is that of Glucose-1-phosphate adenylyltransferase from Mycobacterium marinum (strain ATCC BAA-535 / M).